We begin with the raw amino-acid sequence, 105 residues long: uncharacterized protein (105 aa).

Position 2 is an N-acetylserine (S2).

This is an uncharacterized protein from Saccharomyces cerevisiae (strain ATCC 204508 / S288c) (Baker's yeast).